Consider the following 285-residue polypeptide: Polyamine aminopropyltransferase (285 aa).

One can recognise a PABS domain in the interval 2 to 237; sequence DLWFSESHTP…GYWCFGFASK (236 aa). Gln31 serves as a coordination point for S-methyl-5'-thioadenosine. Asp86 is a binding site for spermidine. Residues Glu106 and 137–138 each bind S-methyl-5'-thioadenosine; that span reads DG. Asp155 acts as the Proton acceptor in catalysis.

Belongs to the spermidine/spermine synthase family. Homodimer or homotetramer.

It is found in the cytoplasm. The enzyme catalyses S-adenosyl 3-(methylsulfanyl)propylamine + putrescine = S-methyl-5'-thioadenosine + spermidine + H(+). Its pathway is amine and polyamine biosynthesis; spermidine biosynthesis; spermidine from putrescine: step 1/1. Its function is as follows. Catalyzes the irreversible transfer of a propylamine group from the amino donor S-adenosylmethioninamine (decarboxy-AdoMet) to putrescine (1,4-diaminobutane) to yield spermidine. The protein is Polyamine aminopropyltransferase of Streptococcus uberis (strain ATCC BAA-854 / 0140J).